Reading from the N-terminus, the 250-residue chain is Nuclear transcription factor Y subunit C-4 (250 aa).

A compositionally biased stretch (low complexity) spans 1–10 (MDNNNNNNNQ). Disordered regions lie at residues 1–35 (MDNN…PSGS) and 209–250 (GVYA…DSQG). Over residues 214-225 (PPSQAWQSVWQN) the composition is skewed to polar residues. The segment covering 227–242 (AGGGDDVSYGSGGSSG) has biased composition (gly residues).

Belongs to the NFYC/HAP5 subunit family. In terms of assembly, heterotrimeric transcription factor composed of three components, NF-YA, NF-YB and NF-YC. NF-YB and NF-YC must interact and dimerize for NF-YA association and DNA binding. Ubiquitous. Present in etiolated seedlings.

The protein localises to the nucleus. Its function is as follows. Stimulates the transcription of various genes by recognizing and binding to a CCAAT motif in promoters. Involved in the abscisic acid (ABA) signaling pathway. The sequence is that of Nuclear transcription factor Y subunit C-4 (NFYC4) from Arabidopsis thaliana (Mouse-ear cress).